A 61-amino-acid polypeptide reads, in one-letter code: MRQGCALTLMLLVVVCAALSAAQLNFSTGWGRRYADPNADPMAFLYKLIQIEARKLAGCSN.

The N-terminal stretch at 1–22 is a signal peptide; the sequence is MRQGCALTLMLLVVVCAALSAA. A Pyrrolidone carboxylic acid modification is found at Q23. Position 30 is a tryptophan amide (W30).

This sequence belongs to the AKH/HRTH/RPCH family. Adipokinetic hormone precursor-related peptide (APRP) can form three type of disulfide-bond dimers: p1 (alpha-alpha), p2 (alpha-beta), and p3 (beta-beta).

It localises to the secreted. In terms of biological role, this hormone, released from cells in the corpora cardiaca, causes release of diglycerides from the fat body and stimulation of muscles to use these diglycerides as an energy source during energy-demanding processes. The chain is Adipokinetic prohormone type 2 from Schistocerca nitens (Vagrant locust).